Consider the following 610-residue polypeptide: Zinc metalloproteinase-disintegrin-like VAP1 (610 aa).

The N-terminal stretch at 1 to 20 is a signal peptide; sequence MIQVLLVTISLAVFPYQGSS. The propeptide occupies 21–189; it reads VILESGNVND…KKASQSNLTP (169 aa). Pyrrolidone carboxylic acid (Glu) is present on E190. Residues 199 to 395 enclose the Peptidase M12B domain; that stretch reads KYVKLFLVAD…NMPQCILKKP (197 aa). An N-linked (GlcNAc...) asparagine glycan is attached at N218. Intrachain disulfides connect C310-C390, C350-C374, and C352-C357. Zn(2+) is bound at residue H335. The Metal-binding motif lies at 335–346; that stretch reads HEMGHNLGMDHD. E336 functions as the Proton acceptor in the catalytic mechanism. Residues H339 and H345 each contribute to the Zn(2+) site. In terms of domain architecture, Disintegrin spans 403 to 488; sequence PAVCGNYFVE…AECTDRFQRN (86 aa). 6 residues coordinate Ca(2+): V405, N408, F410, E412, E415, and D418. Disulfide bonds link C406–C435, C417–C430, C419–C425, C429–C452, C443–C449, C448–C474, C461–C481, C468–C499, C492–C504, C511–C561, C526–C572, C539–C549, C556–C598, and C592–C603. The D/ECD-tripeptide motif lies at 467-469; it reads ECD. Positions 469, 470, 472, 483, and 484 each coordinate Ca(2+).

Belongs to the venom metalloproteinase (M12B) family. P-III subfamily. P-IIIc sub-subfamily. As to quaternary structure, homodimer; disulfide-linked. It depends on Zn(2+) as a cofactor. The N-terminus is blocked. Expressed by the venom gland.

The protein resides in the secreted. With respect to regulation, inhibited by EDTA and EGTA, but not by PMSF. Zinc metalloprotease that has fibrinogenolytic and hemorrhagic activities. It induces apoptosis in vascular endothelial cells (VEC), without degrading extracellular matrix (it cannot cleave collagen) or inhibiting adhesion of VEC. VAP1-induced apoptosis is inhibited by antibodies for integrin alpha-3, alpha-6, beta-1 and CD9. Apoptosis is accompanied by severe cell fragmentation, which is controlled by caspases. This chain is Zinc metalloproteinase-disintegrin-like VAP1, found in Crotalus atrox (Western diamondback rattlesnake).